A 240-amino-acid polypeptide reads, in one-letter code: Cysteine-rich venom protein ablomin (240 aa).

Residues 1 to 19 form the signal peptide; it reads MIVFIVLPILAAVLQQSSG. In terms of domain architecture, SCP spans 38–166; sequence VDLHNSLRRS…EYSYFYVCQY (129 aa). 8 disulfide bridges follow: Cys75–Cys153, Cys92–Cys167, Cys148–Cys164, Cys186–Cys193, Cys189–Cys198, Cys202–Cys235, Cys211–Cys229, and Cys220–Cys233. The 34-residue stretch at 202 to 235 folds into the ShKT domain; the sequence is CTQEDVFTNCNSLVQQSNCQHNYIKTNCPASCFC.

Belongs to the CRISP family. In terms of tissue distribution, expressed by the venom gland.

It is found in the secreted. Functionally, blocks contraction of smooth muscle elicited by high potassium-induced depolarization, but does not block caffeine-stimulated contraction. Since high potassium-treatment activates voltage-gated channels and caffeine exposure activates ryanodine receptors, this toxin may target L-type voltage-gated calcium channels (Cav) (and not ryanodine receptors) on smooth muscle. This toxin also shows a little inhibition on cyclic nucleotide-gated CNGA1 channel. This chain is Cysteine-rich venom protein ablomin, found in Gloydius blomhoffii (Mamushi).